We begin with the raw amino-acid sequence, 440 residues long: Glutamate-1-semialdehyde 2,1-aminomutase (440 aa).

K271 is modified (N6-(pyridoxal phosphate)lysine).

This sequence belongs to the class-III pyridoxal-phosphate-dependent aminotransferase family. HemL subfamily. As to quaternary structure, homodimer. Pyridoxal 5'-phosphate is required as a cofactor.

The protein localises to the cytoplasm. The enzyme catalyses (S)-4-amino-5-oxopentanoate = 5-aminolevulinate. It functions in the pathway porphyrin-containing compound metabolism; protoporphyrin-IX biosynthesis; 5-aminolevulinate from L-glutamyl-tRNA(Glu): step 2/2. This Chlamydia pneumoniae (Chlamydophila pneumoniae) protein is Glutamate-1-semialdehyde 2,1-aminomutase.